The primary structure comprises 305 residues: MIKQRTLKRIVQATGVGLHTGKKVTLTLRPAPANTGVIYRRTDLNPPVDFPADAKSVRDTMLCTCLVNEHDVRISTVEHLNAALAGLGIDNIVIEVNAPEIPIMDGSAAPFVYLLLDAGIDELNCAKKFVRIKETVRVEDGDKWAEFRPYNGFTLDFTIDFNHPAIDSSSQRYAMNFSADAFMRQISRARTFGFMRDIEYLQSRGLCLGGSFDCAIVVDDYRVLNEDGLRFEDEFVRHKMLDAIGDLFMCGHNIIGAFTAYKSGHALNNKLLQAVLANQEAWEFVTFQDDAELPLAFKAPSTVLA.

Residues H79, H238, and D242 each coordinate Zn(2+). H265 serves as the catalytic Proton donor.

This sequence belongs to the LpxC family. Requires Zn(2+) as cofactor.

The enzyme catalyses a UDP-3-O-[(3R)-3-hydroxyacyl]-N-acetyl-alpha-D-glucosamine + H2O = a UDP-3-O-[(3R)-3-hydroxyacyl]-alpha-D-glucosamine + acetate. The protein operates within glycolipid biosynthesis; lipid IV(A) biosynthesis; lipid IV(A) from (3R)-3-hydroxytetradecanoyl-[acyl-carrier-protein] and UDP-N-acetyl-alpha-D-glucosamine: step 2/6. Catalyzes the hydrolysis of UDP-3-O-myristoyl-N-acetylglucosamine to form UDP-3-O-myristoylglucosamine and acetate, the committed step in lipid A biosynthesis. The protein is UDP-3-O-acyl-N-acetylglucosamine deacetylase of Salmonella arizonae (strain ATCC BAA-731 / CDC346-86 / RSK2980).